The sequence spans 559 residues: Formate--tetrahydrofolate ligase (559 aa).

Position 68 to 75 (68 to 75 (TPAGEGKT)) interacts with ATP.

It belongs to the formate--tetrahydrofolate ligase family.

It carries out the reaction (6S)-5,6,7,8-tetrahydrofolate + formate + ATP = (6R)-10-formyltetrahydrofolate + ADP + phosphate. It participates in one-carbon metabolism; tetrahydrofolate interconversion. The protein is Formate--tetrahydrofolate ligase of Rhizobium meliloti (strain 1021) (Ensifer meliloti).